A 120-amino-acid chain; its full sequence is MFALPGYDAFLGFLLIAAAVPVLALVTNKLVAPKSRAGERQLTYESGMEPIGGAWIQFNIRYYMFALVFVIFDVETVFLYPWAVAFNRLGLLAFIEALIFIAILLVALAYAWRKGALEWS.

3 consecutive transmembrane segments (helical) span residues 6 to 26, 64 to 84, and 89 to 109; these read GYDAFLGFLLIAAAVPVLALV, MFALVFVIFDVETVFLYPWAV, and LGLLAFIEALIFIAILLVALA.

Belongs to the complex I subunit 3 family. NDH-1 can be composed of about 15 different subunits; different subcomplexes with different compositions have been identified which probably have different functions.

It is found in the cellular thylakoid membrane. It catalyses the reaction a plastoquinone + NADH + (n+1) H(+)(in) = a plastoquinol + NAD(+) + n H(+)(out). The catalysed reaction is a plastoquinone + NADPH + (n+1) H(+)(in) = a plastoquinol + NADP(+) + n H(+)(out). Functionally, NDH-1 shuttles electrons from an unknown electron donor, via FMN and iron-sulfur (Fe-S) centers, to quinones in the respiratory and/or the photosynthetic chain. The immediate electron acceptor for the enzyme in this species is believed to be plastoquinone. Couples the redox reaction to proton translocation, and thus conserves the redox energy in a proton gradient. Cyanobacterial NDH-1 also plays a role in inorganic carbon-concentration. The chain is NAD(P)H-quinone oxidoreductase subunit 3 from Synechococcus sp. (strain CC9605).